The primary structure comprises 595 residues: Adenine deaminase 3 (595 aa).

Belongs to the metallo-dependent hydrolases superfamily. Adenine deaminase family. Requires Mn(2+) as cofactor.

The catalysed reaction is adenine + H2O + H(+) = hypoxanthine + NH4(+). The protein is Adenine deaminase 3 of Rhizobium meliloti (strain 1021) (Ensifer meliloti).